The following is a 344-amino-acid chain: 4-hydroxy-3-methylbut-2-en-1-yl diphosphate synthase (flavodoxin) (344 aa).

[4Fe-4S] cluster is bound by residues C253, C256, C288, and E295.

This sequence belongs to the IspG family. The cofactor is [4Fe-4S] cluster.

The catalysed reaction is (2E)-4-hydroxy-3-methylbut-2-enyl diphosphate + oxidized [flavodoxin] + H2O + 2 H(+) = 2-C-methyl-D-erythritol 2,4-cyclic diphosphate + reduced [flavodoxin]. Its pathway is isoprenoid biosynthesis; isopentenyl diphosphate biosynthesis via DXP pathway; isopentenyl diphosphate from 1-deoxy-D-xylulose 5-phosphate: step 5/6. Its function is as follows. Converts 2C-methyl-D-erythritol 2,4-cyclodiphosphate (ME-2,4cPP) into 1-hydroxy-2-methyl-2-(E)-butenyl 4-diphosphate. This is 4-hydroxy-3-methylbut-2-en-1-yl diphosphate synthase (flavodoxin) from Thermotoga maritima (strain ATCC 43589 / DSM 3109 / JCM 10099 / NBRC 100826 / MSB8).